The sequence spans 273 residues: Imidazole glycerol phosphate synthase subunit HisF (273 aa).

Residues D11 and D134 contribute to the active site.

It belongs to the HisA/HisF family. In terms of assembly, heterodimer of HisH and HisF.

It localises to the cytoplasm. The catalysed reaction is 5-[(5-phospho-1-deoxy-D-ribulos-1-ylimino)methylamino]-1-(5-phospho-beta-D-ribosyl)imidazole-4-carboxamide + L-glutamine = D-erythro-1-(imidazol-4-yl)glycerol 3-phosphate + 5-amino-1-(5-phospho-beta-D-ribosyl)imidazole-4-carboxamide + L-glutamate + H(+). The protein operates within amino-acid biosynthesis; L-histidine biosynthesis; L-histidine from 5-phospho-alpha-D-ribose 1-diphosphate: step 5/9. Functionally, IGPS catalyzes the conversion of PRFAR and glutamine to IGP, AICAR and glutamate. The HisF subunit catalyzes the cyclization activity that produces IGP and AICAR from PRFAR using the ammonia provided by the HisH subunit. This chain is Imidazole glycerol phosphate synthase subunit HisF, found in Methanocella arvoryzae (strain DSM 22066 / NBRC 105507 / MRE50).